Reading from the N-terminus, the 533-residue chain is Putative replication factor C large subunit (533 aa).

Polar residues predominate over residues 1-11 (MSKTAKNTKTI). A disordered region spans residues 1–31 (MSKTAKNTKTIKSVKSVNKDNKPNKDNKDDK). Over residues 17–31 (VNKDNKPNKDNKDDK) the composition is skewed to basic and acidic residues.

Belongs to the activator 1 large subunit family.

In terms of biological role, part of the RFC clamp loader complex which loads the PCNA sliding clamp onto DNA. The chain is Putative replication factor C large subunit from Acanthamoeba polyphaga (Amoeba).